We begin with the raw amino-acid sequence, 1455 residues long: Cleavage and polyadenylation specificity factor subunit 1 (1455 aa).

Belongs to the CPSF1 family. As to quaternary structure, component of the cleavage and polyadenylation specificity factor (CPSF) complex, composed of at least Clp, Cpsf73, Cpsf100 and Cpsf160.

The protein localises to the nucleus. Component of the cleavage and polyadenylation specificity factor (CPSF) complex that plays a key role in pre-mRNA 3'-end formation, recognizing the AAUAAA signal sequence and interacting with poly(A) polymerase and other factors to bring about cleavage and poly(A) addition. This subunit is involved in the RNA recognition step of the polyadenylation reaction. This Drosophila melanogaster (Fruit fly) protein is Cleavage and polyadenylation specificity factor subunit 1 (Cpsf160).